A 135-amino-acid chain; its full sequence is Mini-ribonuclease 3 (135 aa).

The active site involves aspartate 19.

This sequence belongs to the MrnC RNase family. Homodimer. It depends on Mg(2+) as a cofactor.

It localises to the cytoplasm. Its function is as follows. Involved in correct processing of both the 5' and 3' ends of 23S rRNA precursor. Processes 30S rRNA precursor transcript even in absence of ribonuclease 3 (Rnc); Rnc processes 30S rRNA into smaller rRNA precursors. This Gloeobacter violaceus (strain ATCC 29082 / PCC 7421) protein is Mini-ribonuclease 3.